The sequence spans 102 residues: ATP-dependent Clp protease adapter protein ClpS (102 aa).

This sequence belongs to the ClpS family. In terms of assembly, binds to the N-terminal domain of the chaperone ClpA.

Its function is as follows. Involved in the modulation of the specificity of the ClpAP-mediated ATP-dependent protein degradation. The sequence is that of ATP-dependent Clp protease adapter protein ClpS from Shewanella halifaxensis (strain HAW-EB4).